The following is a 279-amino-acid chain: Urease accessory protein UreD (279 aa).

The protein belongs to the UreD family. UreD, UreF and UreG form a complex that acts as a GTP-hydrolysis-dependent molecular chaperone, activating the urease apoprotein by helping to assemble the nickel containing metallocenter of UreC. The UreE protein probably delivers the nickel.

It localises to the cytoplasm. Its function is as follows. Required for maturation of urease via the functional incorporation of the urease nickel metallocenter. In Nostoc punctiforme (strain ATCC 29133 / PCC 73102), this protein is Urease accessory protein UreD.